The sequence spans 1002 residues: DNA-directed RNA polymerase 1B, mitochondrial (1002 aa).

A mitochondrion-targeting transit peptide spans methionine 1–alanine 21. Catalysis depends on residues aspartate 703, lysine 778, and aspartate 935.

Belongs to the phage and mitochondrial RNA polymerase family.

The protein resides in the mitochondrion. It catalyses the reaction RNA(n) + a ribonucleoside 5'-triphosphate = RNA(n+1) + diphosphate. DNA-dependent RNA polymerase catalyzes the transcription of DNA into RNA using the four ribonucleoside triphosphates as substrates. The polypeptide is DNA-directed RNA polymerase 1B, mitochondrial (RPOT1-TOM) (Nicotiana tabacum (Common tobacco)).